Consider the following 63-residue polypeptide: Cytochrome c oxidase subunit 7C, mitochondrial (63 aa).

The transit peptide at 1–16 (MLGQSIRRFTTSVVRR) directs the protein to the mitochondrion. Topologically, residues 17–33 (SHYEEGPGKNLPFSVEN) are mitochondrial matrix. N6-acetyllysine; alternate is present on lysine 25. Position 25 is an N6-succinyllysine; alternate (lysine 25). The chain crosses the membrane as a helical span at residues 34–60 (KWSLLAKMCLYFGSAFATPFLIVRHQL). Over 61-63 (LKT) the chain is Mitochondrial intermembrane.

This sequence belongs to the cytochrome c oxidase VIIc family. As to quaternary structure, component of the cytochrome c oxidase (complex IV, CIV), a multisubunit enzyme composed of 14 subunits. The complex is composed of a catalytic core of 3 subunits MT-CO1, MT-CO2 and MT-CO3, encoded in the mitochondrial DNA, and 11 supernumerary subunits COX4I, COX5A, COX5B, COX6A, COX6B, COX6C, COX7A, COX7B, COX7C, COX8 and NDUFA4, which are encoded in the nuclear genome. The complex exists as a monomer or a dimer and forms supercomplexes (SCs) in the inner mitochondrial membrane with NADH-ubiquinone oxidoreductase (complex I, CI) and ubiquinol-cytochrome c oxidoreductase (cytochrome b-c1 complex, complex III, CIII), resulting in different assemblies (supercomplex SCI(1)III(2)IV(1) and megacomplex MCI(2)III(2)IV(2)). Interacts with RAB5IF.

The protein localises to the mitochondrion inner membrane. Its pathway is energy metabolism; oxidative phosphorylation. Functionally, component of the cytochrome c oxidase, the last enzyme in the mitochondrial electron transport chain which drives oxidative phosphorylation. The respiratory chain contains 3 multisubunit complexes succinate dehydrogenase (complex II, CII), ubiquinol-cytochrome c oxidoreductase (cytochrome b-c1 complex, complex III, CIII) and cytochrome c oxidase (complex IV, CIV), that cooperate to transfer electrons derived from NADH and succinate to molecular oxygen, creating an electrochemical gradient over the inner membrane that drives transmembrane transport and the ATP synthase. Cytochrome c oxidase is the component of the respiratory chain that catalyzes the reduction of oxygen to water. Electrons originating from reduced cytochrome c in the intermembrane space (IMS) are transferred via the dinuclear copper A center (CU(A)) of subunit 2 and heme A of subunit 1 to the active site in subunit 1, a binuclear center (BNC) formed by heme A3 and copper B (CU(B)). The BNC reduces molecular oxygen to 2 water molecules using 4 electrons from cytochrome c in the IMS and 4 protons from the mitochondrial matrix. In Pongo pygmaeus (Bornean orangutan), this protein is Cytochrome c oxidase subunit 7C, mitochondrial (COX7C).